The sequence spans 204 residues: Transcriptional regulator GfcR (204 aa).

It belongs to the purine/pyrimidine phosphoribosyltransferase family. GfcR subfamily.

The sequence is that of Transcriptional regulator GfcR from Methanoculleus marisnigri (strain ATCC 35101 / DSM 1498 / JR1).